The following is a 108-amino-acid chain: UPF0060 membrane protein CC_1976 (108 aa).

4 helical membrane-spanning segments follow: residues 4-24 (FAIY…FWAW), 27-47 (LGKS…FALL), 59-79 (AFAA…QVVE), and 85-105 (RWDL…LFGP).

The protein belongs to the UPF0060 family.

The protein resides in the cell inner membrane. This chain is UPF0060 membrane protein CC_1976, found in Caulobacter vibrioides (strain ATCC 19089 / CIP 103742 / CB 15) (Caulobacter crescentus).